The primary structure comprises 445 residues: Ribosomal protein uS12 methylthiotransferase RimO (445 aa).

Residues 4-119 enclose the MTTase N-terminal domain; the sequence is IKVALVSLGC…LLESIKVFLK (116 aa). 6 residues coordinate [4Fe-4S] cluster: Cys13, Cys48, Cys82, Cys156, Cys160, and Cys163. Positions 142–372 constitute a Radical SAM core domain; the sequence is TTPTYTAYVR…MILQQSISKD (231 aa). The TRAM domain occupies 375-441; the sequence is KEKIGKTYEV…EYDLIGVVYN (67 aa).

It belongs to the methylthiotransferase family. RimO subfamily. [4Fe-4S] cluster is required as a cofactor.

It localises to the cytoplasm. The catalysed reaction is L-aspartate(89)-[ribosomal protein uS12]-hydrogen + (sulfur carrier)-SH + AH2 + 2 S-adenosyl-L-methionine = 3-methylsulfanyl-L-aspartate(89)-[ribosomal protein uS12]-hydrogen + (sulfur carrier)-H + 5'-deoxyadenosine + L-methionine + A + S-adenosyl-L-homocysteine + 2 H(+). Its function is as follows. Catalyzes the methylthiolation of an aspartic acid residue of ribosomal protein uS12. This is Ribosomal protein uS12 methylthiotransferase RimO from Clostridium botulinum (strain ATCC 19397 / Type A).